Consider the following 538-residue polypeptide: Bifunctional purine biosynthesis protein PurH (538 aa).

Residues 8–158 (IPAPDKVEIK…KNHAYVTILT (151 aa)) enclose the MGS-like domain.

It belongs to the PurH family.

It catalyses the reaction (6R)-10-formyltetrahydrofolate + 5-amino-1-(5-phospho-beta-D-ribosyl)imidazole-4-carboxamide = 5-formamido-1-(5-phospho-D-ribosyl)imidazole-4-carboxamide + (6S)-5,6,7,8-tetrahydrofolate. The catalysed reaction is IMP + H2O = 5-formamido-1-(5-phospho-D-ribosyl)imidazole-4-carboxamide. Its pathway is purine metabolism; IMP biosynthesis via de novo pathway; 5-formamido-1-(5-phospho-D-ribosyl)imidazole-4-carboxamide from 5-amino-1-(5-phospho-D-ribosyl)imidazole-4-carboxamide (10-formyl THF route): step 1/1. The protein operates within purine metabolism; IMP biosynthesis via de novo pathway; IMP from 5-formamido-1-(5-phospho-D-ribosyl)imidazole-4-carboxamide: step 1/1. The protein is Bifunctional purine biosynthesis protein PurH of Rhizobium etli (strain CIAT 652).